The sequence spans 447 residues: uncharacterized protein (447 aa).

It belongs to the class-II fumarase/aspartase family.

It localises to the cytoplasm. Its subcellular location is the nucleus. This is an uncharacterized protein from Schizosaccharomyces pombe (strain 972 / ATCC 24843) (Fission yeast).